A 345-amino-acid chain; its full sequence is tRNA N6-adenosine threonylcarbamoyltransferase (345 aa).

Positions 117 and 121 each coordinate Fe cation. Substrate-binding positions include 140–144, Asp-173, Gly-186, and Asn-279; that span reads LVSGG. Fe cation is bound at residue Asp-307.

It belongs to the KAE1 / TsaD family. It depends on Fe(2+) as a cofactor.

It is found in the cytoplasm. The enzyme catalyses L-threonylcarbamoyladenylate + adenosine(37) in tRNA = N(6)-L-threonylcarbamoyladenosine(37) in tRNA + AMP + H(+). Required for the formation of a threonylcarbamoyl group on adenosine at position 37 (t(6)A37) in tRNAs that read codons beginning with adenine. Is involved in the transfer of the threonylcarbamoyl moiety of threonylcarbamoyl-AMP (TC-AMP) to the N6 group of A37, together with TsaE and TsaB. TsaD likely plays a direct catalytic role in this reaction. The protein is tRNA N6-adenosine threonylcarbamoyltransferase of Verminephrobacter eiseniae (strain EF01-2).